The primary structure comprises 188 residues: Photosystem I assembly protein Ycf4 (188 aa).

2 consecutive transmembrane segments (helical) span residues 26-46 (YFWAVIVSIGGLGFLLAGLSS) and 70-90 (LLFYGTAGTLLAIYLWLSLLW).

It belongs to the Ycf4 family.

The protein localises to the cellular thylakoid membrane. Functionally, seems to be required for the assembly of the photosystem I complex. This Microcystis aeruginosa (strain NIES-843 / IAM M-2473) protein is Photosystem I assembly protein Ycf4.